A 66-amino-acid polypeptide reads, in one-letter code: Large ribosomal subunit protein bL33c (66 aa).

It belongs to the bacterial ribosomal protein bL33 family.

The protein resides in the plastid. It localises to the chloroplast. The protein is Large ribosomal subunit protein bL33c of Physcomitrium patens (Spreading-leaved earth moss).